The following is a 343-amino-acid chain: Phenylalanine--tRNA ligase alpha subunit (343 aa).

E256 lines the Mg(2+) pocket.

The protein belongs to the class-II aminoacyl-tRNA synthetase family. Phe-tRNA synthetase alpha subunit type 1 subfamily. In terms of assembly, tetramer of two alpha and two beta subunits. Mg(2+) is required as a cofactor.

Its subcellular location is the cytoplasm. It catalyses the reaction tRNA(Phe) + L-phenylalanine + ATP = L-phenylalanyl-tRNA(Phe) + AMP + diphosphate + H(+). This Prosthecochloris aestuarii (strain DSM 271 / SK 413) protein is Phenylalanine--tRNA ligase alpha subunit.